Consider the following 157-residue polypeptide: uncharacterized protein (157 aa).

Positions 1–17 (MSMKTKAAFHLVLFGLA) are cleaved as a signal peptide. Cys18 is lipidated: N-palmitoyl cysteine. Cys18 is lipidated: S-diacylglycerol cysteine. Transmembrane regions (helical) follow at residues 42-64 (MVFD…YLYL), 98-120 (ASYI…YPLF), and 124-146 (IPFF…YVIS).

It localises to the cell membrane. This is an uncharacterized protein from Bacillus subtilis (strain 168).